Here is a 659-residue protein sequence, read N- to C-terminus: Putative cysteine-rich receptor-like protein kinase 39 (659 aa).

The signal sequence occupies residues 1 to 27; that stretch reads MGKYSVLMIFIASSLLIVLQNVEIVNA. Gnk2-homologous domains follow at residues 28–134 and 142–253; these read VGCT…NHST and PSVR…LYAF. Topologically, residues 28-289 are extracellular; the sequence is VGCTGSFFNG…KKKGRSIGYG (262 aa). N-linked (GlcNAc...) asparagine glycans are attached at residues asparagine 38, asparagine 64, asparagine 122, asparagine 131, asparagine 157, asparagine 170, asparagine 259, and asparagine 274. Residues 290-310 form a helical membrane-spanning segment; sequence GIIAIVVVLTFINILVFIGYI. Residues 311-659 are Cytoplasmic-facing; that stretch reads KVYGRRKESY…DDVFTELSCR (349 aa). Residues 353–619 enclose the Protein kinase domain; sequence FSSENTLGQG…PTMSSVIIWL (267 aa). Residues 359-367 and lysine 381 contribute to the ATP site; that span reads LGQGGFGTV. Position 426 is a phosphotyrosine (tyrosine 426). Aspartate 478 serves as the catalytic Proton acceptor. Serine 482 is modified (phosphoserine). At threonine 518 the chain carries Phosphothreonine. Tyrosine 526 carries the post-translational modification Phosphotyrosine.

This sequence belongs to the protein kinase superfamily. Ser/Thr protein kinase family. CRK subfamily.

It is found in the membrane. It catalyses the reaction L-seryl-[protein] + ATP = O-phospho-L-seryl-[protein] + ADP + H(+). The enzyme catalyses L-threonyl-[protein] + ATP = O-phospho-L-threonyl-[protein] + ADP + H(+). In Arabidopsis thaliana (Mouse-ear cress), this protein is Putative cysteine-rich receptor-like protein kinase 39 (CRK39).